A 1370-amino-acid polypeptide reads, in one-letter code: DNA-directed RNA polymerase subunit beta (1370 aa).

This sequence belongs to the RNA polymerase beta chain family. The RNAP catalytic core consists of 2 alpha, 1 beta, 1 beta' and 1 omega subunit. When a sigma factor is associated with the core the holoenzyme is formed, which can initiate transcription.

The enzyme catalyses RNA(n) + a ribonucleoside 5'-triphosphate = RNA(n+1) + diphosphate. In terms of biological role, DNA-dependent RNA polymerase catalyzes the transcription of DNA into RNA using the four ribonucleoside triphosphates as substrates. The chain is DNA-directed RNA polymerase subunit beta from Bordetella pertussis (strain Tohama I / ATCC BAA-589 / NCTC 13251).